Reading from the N-terminus, the 335-residue chain is Beta-ketoacyl-[acyl-carrier-protein] synthase III (335 aa).

Residues cysteine 119 and histidine 261 contribute to the active site. The interval 262–266 (QANQR) is ACP-binding. Asparagine 291 is an active-site residue.

The protein belongs to the thiolase-like superfamily. FabH family. In terms of assembly, homodimer.

Its subcellular location is the cytoplasm. The enzyme catalyses malonyl-[ACP] + acetyl-CoA + H(+) = 3-oxobutanoyl-[ACP] + CO2 + CoA. Its pathway is lipid metabolism; fatty acid biosynthesis. Catalyzes the condensation reaction of fatty acid synthesis by the addition to an acyl acceptor of two carbons from malonyl-ACP. Catalyzes the first condensation reaction which initiates fatty acid synthesis and may therefore play a role in governing the total rate of fatty acid production. Possesses both acetoacetyl-ACP synthase and acetyl transacylase activities. Its substrate specificity determines the biosynthesis of branched-chain and/or straight-chain of fatty acids. The chain is Beta-ketoacyl-[acyl-carrier-protein] synthase III from Prochlorococcus marinus (strain MIT 9301).